The following is a 777-amino-acid chain: Semaphorin-4F (777 aa).

An N-terminal signal peptide occupies residues 1 to 40 (MLARAERPRPGPRPPPVSLFPPPSSLLLLLLAMLSAPVCG). The Extracellular segment spans residues 41-667 (RVPRSVPRTS…PANRAHTVVG (627 aa)). The Sema domain maps to 48 to 516 (RTSLPISEAD…SHTEVTQVNT (469 aa)). N-linked (GlcNAc...) asparagine glycosylation is present at N70. A disulfide bridge connects residues C118 and C128. N-linked (GlcNAc...) asparagine glycosylation is present at N139. Disulfide bonds link C146–C155, C279–C390, and C303–C349. A glycan (N-linked (GlcNAc...) asparagine) is linked at N515. The PSI domain occupies 518-569 (NCGRLQSCSECILAQDPVCAWSFRLDACVAHAGEHRGMVQDIESADVSSLCP). Cystine bridges form between C519–C536, C528–C545, and C593–C634. Positions 586–641 (VGHVVLPCSPSSAWASCVWHQPSGVTSLTPRRDGLEVVVTPGAMGAYACECQEGGA) constitute an Ig-like C2-type domain. A helical transmembrane segment spans residues 668–688 (AGLVGFFLGVLAASLTLLLIG). At 689 to 777 (RRQQRRRQRE…PLATCDETSI (89 aa)) the chain is on the cytoplasmic side. A disordered region spans residues 703–742 (DKVGLDLGAPPSGTTSYSQDPPSPSPEDERLPLALGKRGS). Phosphoserine is present on residues S725 and S727. The PDZ-binding motif lies at 775 to 777 (TSI).

Belongs to the semaphorin family. As to quaternary structure, interacts (via PDZ-binding motif) with DLG4/SAP90 (via PDZ domain 2); this interaction may promote translocation of DLG4/SAP90 to the membrane. As to expression, expressed throughout the adult brain, where it shows particularly strong expression in the hippocampus, corpus callosum, granular layer and deep nuclei of the cerebellum, and the mitral layer of the olfactory bulb (at protein level). At the cellular level, detected in neuronal precursors, postmitotic neurons, pyramidal neurons, and glial cells including mature oligodendocytes and oligodendroglial precursor cells (at protein level).

It localises to the cell membrane. It is found in the postsynaptic density. The protein resides in the perikaryon. The protein localises to the cell projection. Its subcellular location is the dendrite. Probable cell surface receptor that regulates oligodendroglial precursor cell migration. Might also regulate differentiation of oligodendroglial precursor cells. Has growth cone collapse activity against retinal ganglion-cell axons. The protein is Semaphorin-4F (Sema4f) of Mus musculus (Mouse).